Consider the following 167-residue polypeptide: Centrin-3 (167 aa).

4 consecutive EF-hand domains span residues 25 to 60 (EQKQ…LGFD), 61 to 96 (VKKA…WILE), 98 to 133 (DPHE…LGEN), and 134 to 167 (MSDE…TGDI). The Ca(2+) site is built by D38, D40, D42, and E49. S135 is subject to Phosphoserine. Positions 147, 149, 151, 153, and 158 each coordinate Ca(2+).

It belongs to the centrin family. As to quaternary structure, monomer. Component of the TREX-2 complex (transcription and export complex 2), composed of at least ENY2, GANP, PCID2, SEM1, and either centrin CETN2 or CETN3. Interacts with USP49.

Its subcellular location is the cytoplasm. The protein localises to the cytoskeleton. It localises to the microtubule organizing center. It is found in the centrosome. The protein resides in the nucleus. Its subcellular location is the nucleolus. The protein localises to the nucleus envelope. It localises to the nuclear pore complex. It is found in the centriole. Its function is as follows. Plays a fundamental role in microtubule-organizing center structure and function. In terms of biological role, as a component of the TREX-2 complex, involved in the export of mRNAs to the cytoplasm through the nuclear pores. The protein is Centrin-3 (Cetn3) of Mus musculus (Mouse).